The sequence spans 367 residues: Peptide chain release factor 2 (367 aa).

Gln-254 is modified (N5-methylglutamine).

The protein belongs to the prokaryotic/mitochondrial release factor family. In terms of processing, methylated by PrmC. Methylation increases the termination efficiency of RF2.

The protein localises to the cytoplasm. In terms of biological role, peptide chain release factor 2 directs the termination of translation in response to the peptide chain termination codons UGA and UAA. In Leptospira interrogans serogroup Icterohaemorrhagiae serovar copenhageni (strain Fiocruz L1-130), this protein is Peptide chain release factor 2.